The primary structure comprises 192 residues: Sporulation initiation phosphotransferase B (192 aa).

Position 30 is a phosphohistidine (H30).

As to quaternary structure, homodimer. Dimerization is essential for activity as both monomers contribute to the formation of the active site. Phosphorylated by spo0F.

The protein localises to the cytoplasm. Key element in the phosphorelay regulating sporulation initiation. Acts on spo0A. Mediates reversible phosphoryl transfer from spo0F to spo0A. This Bacillus subtilis (strain 168) protein is Sporulation initiation phosphotransferase B (spo0B).